The sequence spans 277 residues: Protein PTST, chloroplastic (277 aa).

Residues 1–44 (MGCVPRIEFGCSSQSLTLSWNLRAWNLCRLNTISHFQKLPYPLV) constitute a chloroplast transit peptide. Residues 95–152 (DTERSKLVKKLSEANQQNRFLKRQLKTQEHEITNIKTELALMELEVQALVKLAEEIAN) adopt a coiled-coil conformation.

Interacts with GBSS1.

Its subcellular location is the plastid. The protein localises to the chloroplast stroma. Involved in targeting GBSS1 to the starch granule. Was originally thought to be a carbohydrate-binding scaffold protein, but it has been shown that it is mainly found as a soluble protein and that interaction with GBSS1 is a pre-requisite for subsequent starch granule binding. Dissociation from starch as a function of pH, Mg(2+) concentration or redox state is not observed. Interacts primarily with amylopectin and is required for amylose synthesis. In Arabidopsis thaliana (Mouse-ear cress), this protein is Protein PTST, chloroplastic.